The chain runs to 859 residues: Catenin delta-1 (859 aa).

Residues serine 15–valine 44 are a coiled coil. Residues isoleucine 226 to proline 254 form a disordered region. Residues aspartate 243–proline 254 are compositionally biased toward basic and acidic residues. 10 ARM repeats span residues alanine 279 to tyrosine 317, glutamate 320 to tyrosine 359, arginine 363 to threonine 401, leucine 402 to glycine 446, leucine 464 to serine 503, leucine 513 to glycine 552, alanine 574 to alanine 614, arginine 621 to glycine 660, aspartate 661 to asparagine 700, and threonine 701 to leucine 746.

This sequence belongs to the beta-catenin family. As to quaternary structure, interacts with C-cadherin and with zbtb33. In terms of tissue distribution, ubiquitously expressed.

It is found in the cell junction. The protein localises to the adherens junction. Its subcellular location is the cytoplasm. The protein resides in the nucleus. It localises to the cell membrane. Its function is as follows. Key regulator of cell-cell adhesion that associates with and regulates the cell adhesion properties of both C-, E- and N-cadherins, being critical for their surface stability. Beside cell-cell adhesion, regulates gene transcription through several transcription factors including ZBTB33/Kaiso2 and GLIS2, and the activity of Rho family GTPases and downstream cytoskeletal dynamics. Implicated both in cell transformation by SRC and in ligand-induced receptor signaling through the EGF, PDGF, CSF-1 and ERBB2 receptors. Required for gastrulation, axial elongation and development of the craniofacial skeleton and eye. This is Catenin delta-1 (ctnnd1) from Xenopus laevis (African clawed frog).